A 62-amino-acid polypeptide reads, in one-letter code: Small ribosomal subunit protein eS17 (62 aa).

Belongs to the eukaryotic ribosomal protein eS17 family.

The sequence is that of Small ribosomal subunit protein eS17 from Methanocaldococcus jannaschii (strain ATCC 43067 / DSM 2661 / JAL-1 / JCM 10045 / NBRC 100440) (Methanococcus jannaschii).